The sequence spans 259 residues: Deoxyribose-phosphate aldolase (259 aa).

Catalysis depends on D102, which acts as the Proton donor/acceptor. The active-site Schiff-base intermediate with acetaldehyde is the K167. Catalysis depends on K201, which acts as the Proton donor/acceptor.

Belongs to the DeoC/FbaB aldolase family. DeoC type 2 subfamily.

The protein resides in the cytoplasm. The enzyme catalyses 2-deoxy-D-ribose 5-phosphate = D-glyceraldehyde 3-phosphate + acetaldehyde. The protein operates within carbohydrate degradation; 2-deoxy-D-ribose 1-phosphate degradation; D-glyceraldehyde 3-phosphate and acetaldehyde from 2-deoxy-alpha-D-ribose 1-phosphate: step 2/2. Catalyzes a reversible aldol reaction between acetaldehyde and D-glyceraldehyde 3-phosphate to generate 2-deoxy-D-ribose 5-phosphate. This is Deoxyribose-phosphate aldolase from Proteus mirabilis (strain HI4320).